A 396-amino-acid chain; its full sequence is MVIKPKIRGFICTNAHPVGCEAHVNEQIAYVKAQTSATSGPKNVLVIGASTGYGLASRITSTFGHDAKTLGIFFEKPPTEKKTGSAGWYNTAAFVKAADEAGIYAKNINGDAFSHEIKAKAIEAIKADMGTVDLVVYSLASPRRTDPDTGEVYSSTLKPIGQSVTTKNLNTSKRVIDEVSVEAANDAEIQGTIDVMGGADWELWMNALGEAGVLAEGVKTVAYTYIGKELTWPIYGKATIGKAKEDLDRAATAINAATADLNGQARVTSLNAVVTQASSAIPIMPLYISAMFKVMKADGTYEGCIEQIANLFKENIYSDSPRLDEEGRFRQNYKELEDSVQKRVTDIWNSVDTDTIDELTDYVAYHQEFLKLFGFGIDGVDYDADVSPEVAINNLT.

NAD(+)-binding positions include 48–53 (GASTGY), 74–75 (FE), 111–112 (DA), and 139–140 (LA). Substrate is bound at residue Tyr225. Catalysis depends on Tyr235, which acts as the Proton donor. NAD(+)-binding positions include Lys244 and 273–275 (VVT).

It belongs to the TER reductase family. As to quaternary structure, monomer.

The catalysed reaction is a 2,3-saturated acyl-[ACP] + NAD(+) = a (2E)-enoyl-[ACP] + NADH + H(+). The protein operates within lipid metabolism; fatty acid biosynthesis. In terms of biological role, involved in the final reduction of the elongation cycle of fatty acid synthesis (FAS II). Catalyzes the reduction of a carbon-carbon double bond in an enoyl moiety that is covalently linked to an acyl carrier protein (ACP). This chain is Enoyl-[acyl-carrier-protein] reductase [NADH], found in Colwellia psychrerythraea (strain 34H / ATCC BAA-681) (Vibrio psychroerythus).